The chain runs to 107 residues: Large ribosomal subunit protein P1 (107 aa).

Residues 68–82 (PATAGAPAAAGAAAP) are compositionally biased toward low complexity. Positions 68–107 (PATAGAPAAAGAAAPAEEKKEEKEEEKEESDEDMGFGLFD) are disordered. Positions 90–101 (KEEEKEESDEDM) are enriched in acidic residues.

The protein belongs to the eukaryotic ribosomal protein P1/P2 family. In terms of assembly, P1 and P2 exist as dimers at the large ribosomal subunit.

It localises to the cytoplasm. Its function is as follows. Plays an important role in the elongation step of protein synthesis. The chain is Large ribosomal subunit protein P1 from Penicillium brevicompactum.